The following is a 533-amino-acid chain: Berberine bridge enzyme-like 12 (533 aa).

A signal peptide spans 1–20; the sequence is MYLIFLLFFAASYSMSLSSA. Residues Cys32 and Cys95 are joined by a disulfide bond. N-linked (GlcNAc...) asparagine glycans are attached at residues Asn35, Asn70, Asn133, Asn296, Asn412, and Asn417. The 177-residue stretch at 73–249 folds into the FAD-binding PCMH-type domain; it reads SMPKPSIIIV…LAFKVKLVTV (177 aa). A cross-link (6-(S-cysteinyl)-8alpha-(pros-histidyl)-FAD (His-Cys)) is located at residues 110 to 174; it reads HDYDGLSYVS…EVHAFPAGVC (65 aa).

The protein belongs to the oxygen-dependent FAD-linked oxidoreductase family. It depends on FAD as a cofactor. In terms of processing, the FAD cofactor is bound via a bicovalent 6-S-cysteinyl, 8alpha-N1-histidyl FAD linkage.

It localises to the secreted. The protein localises to the cell wall. This chain is Berberine bridge enzyme-like 12, found in Arabidopsis thaliana (Mouse-ear cress).